Reading from the N-terminus, the 503-residue chain is Probable cytosol aminopeptidase (503 aa).

Residues Lys-270 and Asp-275 each coordinate Mn(2+). Lys-282 is an active-site residue. The Mn(2+) site is built by Asp-293, Asp-352, and Glu-354. Residue Arg-356 is part of the active site.

It belongs to the peptidase M17 family. It depends on Mn(2+) as a cofactor.

It localises to the cytoplasm. It catalyses the reaction Release of an N-terminal amino acid, Xaa-|-Yaa-, in which Xaa is preferably Leu, but may be other amino acids including Pro although not Arg or Lys, and Yaa may be Pro. Amino acid amides and methyl esters are also readily hydrolyzed, but rates on arylamides are exceedingly low.. It carries out the reaction Release of an N-terminal amino acid, preferentially leucine, but not glutamic or aspartic acids.. In terms of biological role, presumably involved in the processing and regular turnover of intracellular proteins. Catalyzes the removal of unsubstituted N-terminal amino acids from various peptides. The protein is Probable cytosol aminopeptidase of Salmonella typhi.